We begin with the raw amino-acid sequence, 473 residues long: GTPase Der (473 aa).

EngA-type G domains lie at 3 to 167 (FTVA…GEDR) and 203 to 378 (LRVA…KVWN). Residues 9–16 (GRPNVGKS), 56–60 (DTAGL), 119–122 (NKSE), 209–216 (GRPNAGKS), 256–260 (DTAGM), and 321–324 (NKWD) each bind GTP. The KH-like domain occupies 379 to 463 (KRISTARLNR…PIRIHFRSPD (85 aa)).

The protein belongs to the TRAFAC class TrmE-Era-EngA-EngB-Septin-like GTPase superfamily. EngA (Der) GTPase family. Associates with the 50S ribosomal subunit.

GTPase that plays an essential role in the late steps of ribosome biogenesis. The sequence is that of GTPase Der from Rhizobium johnstonii (strain DSM 114642 / LMG 32736 / 3841) (Rhizobium leguminosarum bv. viciae).